A 540-amino-acid chain; its full sequence is Membrane protein insertase YidC (540 aa).

The helical transmembrane segment at 6 to 26 (NILLIALALVSFLLFQQWQVA) threads the bilayer. Residues 36-63 (QAQSSSTLPAPSFADELDPVPGQQQASA) are disordered. Transmembrane regions (helical) follow at residues 342-362 (AFIQ…TFIV), 417-437 (LGGC…YWAL), 455-475 (LSAQ…MFLI), and 496-516 (PVMF…YWLV).

It belongs to the OXA1/ALB3/YidC family. Type 1 subfamily. As to quaternary structure, interacts with the Sec translocase complex via SecD. Specifically interacts with transmembrane segments of nascent integral membrane proteins during membrane integration.

The protein localises to the cell inner membrane. Required for the insertion and/or proper folding and/or complex formation of integral membrane proteins into the membrane. Involved in integration of membrane proteins that insert both dependently and independently of the Sec translocase complex, as well as at least some lipoproteins. Aids folding of multispanning membrane proteins. The chain is Membrane protein insertase YidC from Vibrio campbellii (strain ATCC BAA-1116).